The primary structure comprises 1128 residues: Probable serine/threonine-protein kinase DDB_G0283337 (1128 aa).

Positions 1-17 (MENNNNNNINKTNTPNN) are enriched in low complexity. Disordered stretches follow at residues 1–21 (MENN…SFSP), 60–100 (INHN…NNNN), 131–151 (RESN…NNSN), 236–256 (NNSK…SNSN), and 375–504 (NDNE…NSEQ). Composition is skewed to low complexity over residues 243-256 (NSSN…SNSN) and 375-502 (NDNE…NNNS). One can recognise a Protein kinase domain in the interval 777–1054 (LSDFSIIGEG…EIQKCKEEYE (278 aa)). ATP contacts are provided by residues 783–791 (IGEGGFSTV) and Lys809. Asp904 functions as the Proton acceptor in the catalytic mechanism.

This sequence belongs to the protein kinase superfamily. Ser/Thr protein kinase family.

It catalyses the reaction L-seryl-[protein] + ATP = O-phospho-L-seryl-[protein] + ADP + H(+). The enzyme catalyses L-threonyl-[protein] + ATP = O-phospho-L-threonyl-[protein] + ADP + H(+). In Dictyostelium discoideum (Social amoeba), this protein is Probable serine/threonine-protein kinase DDB_G0283337.